Reading from the N-terminus, the 313-residue chain is Fucose-specific lectin (313 aa).

A run of 6 repeats spans residues 5–57, 58–109, 110–162, 163–208, 209–260, and 261–304. The interval 5 to 304 is 6 X approximate tandem repeats; sequence FLYTSKIAAI…SGKGWSIGAV (300 aa). Beta-L-fucose is bound by residues R25, E37, R78, E90, W98, Q102, R132, E147, and W154. Alpha-L-fucose is bound by residues R78 and E90. Q102 serves as a coordination point for alpha-L-fucose. W154, R180, and E192 together coordinate alpha-L-fucose. Position 200 (W200) interacts with beta-L-fucose. G204 is an alpha-L-fucose binding site. Residues R227 and E239 each coordinate beta-L-fucose. W246 provides a ligand contact to alpha-L-fucose. Residue W299 participates in beta-L-fucose binding.

It belongs to the fungal fucose-specific lectin family. As to quaternary structure, forms homodimers. The two AAL monomers are associated via interactions between N-terminal and C-terminal peptides. Tyr-7 interacts via aromatic ring stacking with its counterpart on the other monomer, whereas Ser-284 interacts via hydrogen bonding with Asp-264 on the other monomer.

Its function is as follows. Lectin that specifically binds to L-fucose. Has strongest preference for the alpha-1,6-fucosylated chain (core fucose) on glycoproteins among alpha-1,2-, alpha-1,3-, alpha-1,4-, and alpha-1,6-fucosylated chains. Might play a role in the differentiation of the fruiting body. Exhibits antifungal activity against Mucor racemosus and thus could act as an antifungal protein in natural ecosystems. This Aleuria aurantia (Orange peel mushroom) protein is Fucose-specific lectin.